The chain runs to 382 residues: O-antigen polymerase (382 aa).

Topologically, residues 1-3 (MNN) are cytoplasmic. Residues 4–22 (INKIFITFLCIELIIGGGG) traverse the membrane as a helical segment. Over 23 to 34 (RLLEPLGIFPLR) the chain is Periplasmic. The chain crosses the membrane as a helical span at residues 35-54 (YLLFVFSFILLIFNLVTFNF). Over 55-62 (SITQKCVS) the chain is Cytoplasmic. Residues 63–81 (LFIWLLLFPFYGFFVGLLA) form a helical membrane-spanning segment. Residues 82-94 (GNKINDILFDVQP) are Periplasmic-facing. Residues 95–112 (YLFMLSLIYLFTLRYTLK) form a helical membrane-spanning segment. Topologically, residues 113–125 (VFSCEIFIKIVNA) are cytoplasmic. The helical transmembrane segment at 126 to 146 (FALYGSLLYISYIILLNFGLL) threads the bilayer. The Periplasmic segment spans residues 147 to 167 (NFNLIYEHLSLTSEFFFRPDG). A helical transmembrane segment spans residues 168-187 (AFFSKSFYFFGVGAIISFVD). Topologically, residues 188–189 (KK) are cytoplasmic. Residues 190-206 (YLKCLIIVLAILLTESR) form a helical membrane-spanning segment. Residues 207–208 (GV) lie on the Periplasmic side of the membrane. Residues 209–226 (LLFTTLSLLLASFKLHKL) form a helical membrane-spanning segment. The Cytoplasmic portion of the chain corresponds to 227 to 229 (YLN). A helical transmembrane segment spans residues 230–247 (TIIIILGSVLFIIMLYMV). Residues 248 to 300 (GSRSEDSDSVRFNDLYFYYKNVDLATFLFGRGFGSFILDRLRIEIVPLEILQK) are Periplasmic-facing. Residues 301-318 (TGVIGVFISLVPMLLIFL) form a helical membrane-spanning segment. The Cytoplasmic portion of the chain corresponds to 319–329 (KGYFLNSTKTS). Residues 330–349 (LMMSLILFFSITVSITNPFL) traverse the membrane as a helical segment. The Periplasmic portion of the chain corresponds to 350-352 (FTP). Residues 353-370 (MGIFIIGVVVLWVFSIEN) traverse the membrane as a helical segment. Topologically, residues 371-382 (IQISNNLTSGAK) are cytoplasmic.

Its subcellular location is the cell inner membrane. The catalysed reaction is n lipid-linked O-antigen repeat units = a lipid-linked O antigen + (n-1) polyisoprenyl diphosphate.. The protein operates within bacterial outer membrane biogenesis; LPS O-antigen biosynthesis. Polymerase involved in the biosynthesis of the lipopolysaccharide (LPS). Catalyzes the polymerization of the O-antigen repeat units on the periplasmic face of the inner membrane, leading to the formation of the lipid-linked O-antigen molecule. This is O-antigen polymerase from Shigella flexneri.